Consider the following 100-residue polypeptide: Urease subunit gamma (100 aa).

This sequence belongs to the urease gamma subunit family. As to quaternary structure, heterotrimer of UreA (gamma), UreB (beta) and UreC (alpha) subunits. Three heterotrimers associate to form the active enzyme.

The protein localises to the cytoplasm. It carries out the reaction urea + 2 H2O + H(+) = hydrogencarbonate + 2 NH4(+). Its pathway is nitrogen metabolism; urea degradation; CO(2) and NH(3) from urea (urease route): step 1/1. The polypeptide is Urease subunit gamma (Haemophilus influenzae (strain 86-028NP)).